The chain runs to 367 residues: MKRVLVAMSGGVDSSVAALLLKEAGYEVVGAMMRFWPDLPPPSLEAGKPRAWESCCTPDAAYEARRVADRLGIPFYLLDYREVFEEEIISPFLQDYAQGRTPNPCARCNTFVKFGALLKQARRLGLDYVATGHYVRKEGLALLRGLDPHKDQTYFLWGTPKEALPHLLFPVGGLTKPEVRALAEKAGLPTARRPESQNLCFVAGDLKGFLKERLKPRPGPLVDALTGEVVGEHEGASLYTLGQRKGLGLYKTHLERYVVGVDPERNVVYVGPKEACYFEGLEGEGLNLLAELPEEVEVQVRYRTPPVRAKVESLSPLRLRFAHPVFAVTPGQSAVFYRGERLLGGAVIRRGLYNLAGLEDPRALTFS.

ATP is bound by residues 7 to 14 (AMSGGVDS) and Met33. The Nucleophile role is filled by Cys108. Cys108 and Cys200 form a disulfide bridge. Gly132 contacts ATP. Positions 150-152 (KDQ) are interaction with tRNA. Residue Cys200 is the Cysteine persulfide intermediate of the active site. The segment at 301–302 (RY) is interaction with tRNA.

This sequence belongs to the MnmA/TRMU family.

The protein localises to the cytoplasm. The enzyme catalyses S-sulfanyl-L-cysteinyl-[protein] + uridine(34) in tRNA + AH2 + ATP = 2-thiouridine(34) in tRNA + L-cysteinyl-[protein] + A + AMP + diphosphate + H(+). Its function is as follows. Catalyzes the 2-thiolation of uridine at the wobble position (U34) of tRNA, leading to the formation of s(2)U34. The chain is tRNA-specific 2-thiouridylase MnmA from Thermus thermophilus (strain ATCC BAA-163 / DSM 7039 / HB27).